The primary structure comprises 326 residues: ELMO domain-containing protein 1 (326 aa).

The region spanning 133–306 (QHEEMLLKLW…KFRKRIIKQL (174 aa)) is the ELMO domain.

Acts as a GTPase-activating protein (GAP) toward guanine nucleotide exchange factors like ARL2, ARL3, ARF1 and ARF6, but not for GTPases outside the Arf family. The chain is ELMO domain-containing protein 1 (Elmod1) from Mus musculus (Mouse).